The following is a 409-amino-acid chain: Peptidase T (409 aa).

Zn(2+) is bound at residue His78. Asp80 is a catalytic residue. Residue Asp141 coordinates Zn(2+). Residue Glu175 is the Proton acceptor of the active site. Zn(2+)-binding residues include Glu176, Asp198, and His380.

The protein belongs to the peptidase M20B family. Zn(2+) serves as cofactor.

The protein resides in the cytoplasm. The catalysed reaction is Release of the N-terminal residue from a tripeptide.. Its function is as follows. Cleaves the N-terminal amino acid of tripeptides. In Caldanaerobacter subterraneus subsp. tengcongensis (strain DSM 15242 / JCM 11007 / NBRC 100824 / MB4) (Thermoanaerobacter tengcongensis), this protein is Peptidase T.